The following is a 296-amino-acid chain: MQTKEKLASLSYLAVKSLLYELNLTPKPGLVDCHNNGAHNDMDFYTFLDSILSLSPFFKKYIEVGWLYHNESPQYLFNQLRKLGIEAEAAMFSATERVNTHKGINFSFALLLGATGSYLAKHIELIQEKRRFMPQDSLTICHLAGEMSMHLIQNDLSHVETKRNLTYGEKLFLQYGLKGLRGEASQGYPSLTQKALPFFRNELLKKQDIQISQLKLLLYLMTFIEDSNIIHRGGIKSWKKVQQEAQTLLEKDLPPYQLKEQLNSYNQILTDRHLSPGGAADLLSLTLYFSFLEQLI.

Belongs to the CitG/MdcB family.

It carries out the reaction 3'-dephospho-CoA + ATP = 2'-(5''-triphospho-alpha-D-ribosyl)-3'-dephospho-CoA + adenine. The chain is Probable 2-(5''-triphosphoribosyl)-3'-dephosphocoenzyme-A synthase from Streptococcus mutans serotype c (strain ATCC 700610 / UA159).